Here is a 438-residue protein sequence, read N- to C-terminus: ATP-dependent RNA helicase RhlB (438 aa).

The short motif at 9-37 (QRFADLPLHPEVKQALAENGFEFCTPIQA) is the Q motif element. A Helicase ATP-binding domain is found at 40–219 (LPVLLQSKDI…YDHMNEPVKV (180 aa)). 53–60 (AQTGTGKT) contacts ATP. Residues 165–168 (DEAD) carry the DEAD box motif. One can recognise a Helicase C-terminal domain in the interval 243–390 (KMRLLLTLIE…VSNYDSEALL (148 aa)). Positions 395-438 (TPAKIHRKHPSGTRNLRDRSGTSRPGAQRSGARPPRHDRTRRHS) are disordered. Positions 428–438 (PPRHDRTRRHS) are enriched in basic residues.

This sequence belongs to the DEAD box helicase family. RhlB subfamily. Component of the RNA degradosome, which is a multiprotein complex involved in RNA processing and mRNA degradation.

The protein localises to the cytoplasm. It carries out the reaction ATP + H2O = ADP + phosphate + H(+). Its function is as follows. DEAD-box RNA helicase involved in RNA degradation. Has RNA-dependent ATPase activity and unwinds double-stranded RNA. This Shewanella baltica (strain OS223) protein is ATP-dependent RNA helicase RhlB.